The sequence spans 91 residues: Putative regulatory protein DSY2730 (91 aa).

The protein belongs to the RemA family.

This chain is Putative regulatory protein DSY2730, found in Desulfitobacterium hafniense (strain Y51).